The sequence spans 259 residues: Oxaloacetate tautomerase FMP41, mitochondrial (259 aa).

Mg(2+)-binding residues include Glu-87, Glu-89, and Asp-121.

This sequence belongs to the FAH family. Mg(2+) serves as cofactor. Mn(2+) is required as a cofactor.

It is found in the mitochondrion. The enzyme catalyses oxaloacetate = enol-oxaloacetate. Its function is as follows. Tautomerase that converts enol-oxaloacetate, a strong inhibitor of succinate dehydrogenase, to the physiological keto form of oxaloacetate. The sequence is that of Oxaloacetate tautomerase FMP41, mitochondrial from Saccharomyces cerevisiae (strain ATCC 204508 / S288c) (Baker's yeast).